A 96-amino-acid polypeptide reads, in one-letter code: Large ribosomal subunit protein bL27 (96 aa).

Residues 1–9 (MLNMNLQLL) constitute a propeptide that is removed on maturation.

It belongs to the bacterial ribosomal protein bL27 family. In terms of processing, the N-terminus is cleaved by ribosomal processing cysteine protease Prp.

This is Large ribosomal subunit protein bL27 from Clostridioides difficile (strain 630) (Peptoclostridium difficile).